We begin with the raw amino-acid sequence, 174 residues long: Eukaryotic translation elongation factor 1 epsilon-1 (174 aa).

Alanine 2 carries the N-acetylalanine modification. The tract at residues 2 to 56 (AAAAELSLLEKSLGLSKGNKYSAQGERQIPVLQTNNGPSLTGLTTIAAHLVKQAN) is N-terminal. Residues 50-173 (HLVKQANKEY…FIKNRLYTNS (124 aa)) form the GST C-terminal domain. The interval 57 to 63 (KEYLLGS) is linker. The tract at residues 64–152 (TAEEKAIVQQ…SRWFCHIQHY (89 aa)) is C-terminal. The residue at position 138 (lysine 138) is an N6-acetyllysine. Residues 153 to 169 (PGIRQHLSSVVFIKNRL) adopt a coiled-coil conformation.

In terms of assembly, part of a multisubunit complex that groups tRNA ligases for Arg (RARS1), Asp (DARS1), Gln (QARS1), Ile (IARS1), Leu (LARS1), Lys (KARS1), Met (MARS1) the bifunctional ligase for Glu and Pro (EPRS1) and the auxiliary subunits AIMP1/p43, AIMP2/p38 and EEF1E1/p18. Can interact simultaneously with MARS1 and EPRS1. Forms a linear complex that contains MARS1, EEF1E1, EPRS1 and AIMP2 that is at the core of the multisubunit complex. Interacts with ATM and ATR. The interaction with ATM, which takes place independently of TP53, is induced by DNA damage that may occur during genotoxic stress or cell growth. The interaction with ATR is enhanced by UV irradiation. Down-regulated in various cancer tissues.

The protein localises to the cytoplasm. Its subcellular location is the cytosol. The protein resides in the nucleus. In terms of biological role, positive modulator of ATM response to DNA damage. The protein is Eukaryotic translation elongation factor 1 epsilon-1 (EEF1E1) of Homo sapiens (Human).